We begin with the raw amino-acid sequence, 135 residues long: Small ribosomal subunit protein uS12c (135 aa).

This sequence belongs to the universal ribosomal protein uS12 family. As to quaternary structure, part of the 30S ribosomal subunit.

The protein resides in the plastid. It is found in the chloroplast. Its function is as follows. With S4 and S5 plays an important role in translational accuracy. Located at the interface of the 30S and 50S subunits. The sequence is that of Small ribosomal subunit protein uS12c (rps12) from Adiantum capillus-veneris (Maidenhair fern).